Reading from the N-terminus, the 264-residue chain is Protein-lysine methyltransferase METTL21C (264 aa).

Over residues 1-10 (MDVCLSSAQQ) the composition is skewed to polar residues. Residues 1–46 (MDVCLSSAQQPGRRGEGLSSPGGWLEAEKKGAPQKDSTGGVLEESN) are disordered. S-adenosyl-L-methionine is bound by residues W92, 120–122 (GAG), D141, W172, and S193.

This sequence belongs to the methyltransferase superfamily. METTL21 family. In terms of assembly, interacts with members of the heat shock protein 70 families; these proteins may possibly be methylation substrates for the enzyme.

The protein localises to the nucleus. It is found in the cytoplasm. It catalyses the reaction L-lysyl-[protein] + S-adenosyl-L-methionine = N(6)-methyl-L-lysyl-[protein] + S-adenosyl-L-homocysteine + H(+). The enzyme catalyses N(6)-methyl-L-lysyl-[protein] + S-adenosyl-L-methionine = N(6),N(6)-dimethyl-L-lysyl-[protein] + S-adenosyl-L-homocysteine + H(+). The catalysed reaction is N(6),N(6)-dimethyl-L-lysyl-[protein] + S-adenosyl-L-methionine = N(6),N(6),N(6)-trimethyl-L-lysyl-[protein] + S-adenosyl-L-homocysteine + H(+). Functionally, protein-lysine N-methyltransferase using S-adenosyl-L-methionine as methyl donor. Mono-di and trimethylates 'Lys-943' of AARS1. The sequence is that of Protein-lysine methyltransferase METTL21C from Homo sapiens (Human).